Here is a 152-residue protein sequence, read N- to C-terminus: SsrA-binding protein (152 aa).

The protein belongs to the SmpB family.

It localises to the cytoplasm. Functionally, required for rescue of stalled ribosomes mediated by trans-translation. Binds to transfer-messenger RNA (tmRNA), required for stable association of tmRNA with ribosomes. tmRNA and SmpB together mimic tRNA shape, replacing the anticodon stem-loop with SmpB. tmRNA is encoded by the ssrA gene; the 2 termini fold to resemble tRNA(Ala) and it encodes a 'tag peptide', a short internal open reading frame. During trans-translation Ala-aminoacylated tmRNA acts like a tRNA, entering the A-site of stalled ribosomes, displacing the stalled mRNA. The ribosome then switches to translate the ORF on the tmRNA; the nascent peptide is terminated with the 'tag peptide' encoded by the tmRNA and targeted for degradation. The ribosome is freed to recommence translation, which seems to be the essential function of trans-translation. This chain is SsrA-binding protein, found in Helicobacter pylori (strain HPAG1).